We begin with the raw amino-acid sequence, 363 residues long: 3-dehydroquinate synthase (363 aa).

Residues 134–135, K147, K156, and 174–177 each bind NAD(+); these read TT and TLIT. Positions 189, 254, and 271 each coordinate Zn(2+).

It belongs to the sugar phosphate cyclases superfamily. Dehydroquinate synthase family. NAD(+) serves as cofactor. Co(2+) is required as a cofactor. Requires Zn(2+) as cofactor.

It is found in the cytoplasm. The enzyme catalyses 7-phospho-2-dehydro-3-deoxy-D-arabino-heptonate = 3-dehydroquinate + phosphate. It participates in metabolic intermediate biosynthesis; chorismate biosynthesis; chorismate from D-erythrose 4-phosphate and phosphoenolpyruvate: step 2/7. Functionally, catalyzes the conversion of 3-deoxy-D-arabino-heptulosonate 7-phosphate (DAHP) to dehydroquinate (DHQ). The polypeptide is 3-dehydroquinate synthase (Prochlorococcus marinus subsp. pastoris (strain CCMP1986 / NIES-2087 / MED4)).